The sequence spans 688 residues: Potassium-transporting ATPase ATP-binding subunit (688 aa).

4 helical membrane-spanning segments follow: residues 37-57, 65-85, 219-239, and 262-282; these read FLVY…LVGI, ILGI…AEAI, IALQ…TVSL, and VALL…SIGI. Aspartate 313 serves as the catalytic 4-aspartylphosphate intermediate. ATP contacts are provided by residues aspartate 350, glutamate 354, 383–390, and lysine 401; that span reads FTAKTRMS. Residues aspartate 524 and aspartate 528 each contribute to the Mg(2+) site. The next 3 membrane-spanning stretches (helical) occupy residues 594 to 614, 622 to 642, and 668 to 688; these read FAII…LNIM, AIFS…PLAL, and IIVP…IGIV.

Belongs to the cation transport ATPase (P-type) (TC 3.A.3) family. Type IA subfamily. In terms of assembly, the system is composed of three essential subunits: KdpA, KdpB and KdpC.

The protein resides in the cell membrane. It carries out the reaction K(+)(out) + ATP + H2O = K(+)(in) + ADP + phosphate + H(+). In terms of biological role, part of the high-affinity ATP-driven potassium transport (or Kdp) system, which catalyzes the hydrolysis of ATP coupled with the electrogenic transport of potassium into the cytoplasm. This subunit is responsible for energy coupling to the transport system and for the release of the potassium ions to the cytoplasm. This Clostridium botulinum (strain Alaska E43 / Type E3) protein is Potassium-transporting ATPase ATP-binding subunit.